Here is a 177-residue protein sequence, read N- to C-terminus: Large ribosomal subunit protein bL31m (177 aa).

A mitochondrion-targeting transit peptide spans 1 to 14; sequence MLKSIFAKRFASTG. Residues 36–118 form a sufficient for general mitochondrial translation region; sequence KSRPAIYHQF…FSVDSTTPNS (83 aa). A sufficient for dosage suppression of COX2 mutation region spans residues 87 to 177; that stretch reads LVVVDANSGG…KLASKKRDKK (91 aa). The segment covering 111–123 has biased composition (polar residues); sequence VDSTTPNSSSETV. The tract at residues 111 to 144 is disordered; sequence VDSTTPNSSSETVELSEENKKKTQIKKEEKEDVS. The span at 127 to 144 shows a compositional bias: basic and acidic residues; the sequence is EENKKKTQIKKEEKEDVS.

Belongs to the bacterial ribosomal protein bL31 family. Highly divergent. As to quaternary structure, component of the mitochondrial large ribosomal subunit (mt-LSU). Mature yeast 74S mitochondrial ribosomes consist of a small (37S) and a large (54S) subunit. The 37S small subunit contains a 15S ribosomal RNA (15S mt-rRNA) and 34 different proteins. The 54S large subunit contains a 21S rRNA (21S mt-rRNA) and 46 different proteins.

It is found in the mitochondrion. In terms of biological role, component of the mitochondrial ribosome (mitoribosome), a dedicated translation machinery responsible for the synthesis of mitochondrial genome-encoded proteins, including at least some of the essential transmembrane subunits of the mitochondrial respiratory chain. The mitoribosomes are attached to the mitochondrial inner membrane and translation products are cotranslationally integrated into the membrane. Overexpression of bL31m suppresses mutations in the COX2 leader peptide-encoding and initiation codon regions. This Saccharomyces cerevisiae (strain ATCC 204508 / S288c) (Baker's yeast) protein is Large ribosomal subunit protein bL31m (MRPL36).